Here is a 485-residue protein sequence, read N- to C-terminus: Glutamyl-tRNA(Gln) amidotransferase subunit A (485 aa).

Residues K79 and S154 each act as charge relay system in the active site. S178 serves as the catalytic Acyl-ester intermediate.

This sequence belongs to the amidase family. GatA subfamily. Heterotrimer of A, B and C subunits.

It carries out the reaction L-glutamyl-tRNA(Gln) + L-glutamine + ATP + H2O = L-glutaminyl-tRNA(Gln) + L-glutamate + ADP + phosphate + H(+). Functionally, allows the formation of correctly charged Gln-tRNA(Gln) through the transamidation of misacylated Glu-tRNA(Gln) in organisms which lack glutaminyl-tRNA synthetase. The reaction takes place in the presence of glutamine and ATP through an activated gamma-phospho-Glu-tRNA(Gln). The polypeptide is Glutamyl-tRNA(Gln) amidotransferase subunit A (Bacillus velezensis (strain DSM 23117 / BGSC 10A6 / LMG 26770 / FZB42) (Bacillus amyloliquefaciens subsp. plantarum)).